Here is a 378-residue protein sequence, read N- to C-terminus: Carbamoyl phosphate synthase small chain (378 aa).

Residues 1-189 are CPSase; that stretch reads MTKPAILALA…DSHPEIAASE (189 aa). L-glutamine is bound by residues Ser-47, Gly-241, and Gly-243. Residues 193 to 378 form the Glutamine amidotransferase type-1 domain; that stretch reads HVVAYDYGVK…RFIDAMAKRR (186 aa). Catalysis depends on Cys-269, which acts as the Nucleophile. L-glutamine-binding residues include Leu-270, Gln-273, Asn-311, Gly-313, and Phe-314. Active-site residues include His-353 and Glu-355.

Belongs to the CarA family. In terms of assembly, composed of two chains; the small (or glutamine) chain promotes the hydrolysis of glutamine to ammonia, which is used by the large (or ammonia) chain to synthesize carbamoyl phosphate. Tetramer of heterodimers (alpha,beta)4.

It catalyses the reaction hydrogencarbonate + L-glutamine + 2 ATP + H2O = carbamoyl phosphate + L-glutamate + 2 ADP + phosphate + 2 H(+). It carries out the reaction L-glutamine + H2O = L-glutamate + NH4(+). The protein operates within amino-acid biosynthesis; L-arginine biosynthesis; carbamoyl phosphate from bicarbonate: step 1/1. Its pathway is pyrimidine metabolism; UMP biosynthesis via de novo pathway; (S)-dihydroorotate from bicarbonate: step 1/3. Functionally, small subunit of the glutamine-dependent carbamoyl phosphate synthetase (CPSase). CPSase catalyzes the formation of carbamoyl phosphate from the ammonia moiety of glutamine, carbonate, and phosphate donated by ATP, constituting the first step of 2 biosynthetic pathways, one leading to arginine and/or urea and the other to pyrimidine nucleotides. The small subunit (glutamine amidotransferase) binds and cleaves glutamine to supply the large subunit with the substrate ammonia. This chain is Carbamoyl phosphate synthase small chain, found in Pseudomonas syringae pv. tomato (strain ATCC BAA-871 / DC3000).